The chain runs to 162 residues: uncharacterized protein (162 aa).

This is an uncharacterized protein from Rhodobacter capsulatus (Rhodopseudomonas capsulata).